Consider the following 428-residue polypeptide: Homocitrate synthase, cytosolic isozyme (428 aa).

Positions 23 to 276 (FQLIDSTLRE…KSKYKLHKIR (254 aa)) constitute a Pyruvate carboxyltransferase domain. Arginine 31 contacts 2-oxoglutarate. Glutamate 32 contributes to the Mg(2+) binding site. Histidine 91, arginine 151, and threonine 185 together coordinate 2-oxoglutarate. Mg(2+)-binding residues include histidine 212 and histidine 214. The active-site Proton acceptor is histidine 309. Residue serine 385 is modified to Phosphoserine. Position 396 is a phosphothreonine (threonine 396). Residues 399–428 (VLSAKKNKKNDSDVPELATIPAAKRTKPSA) form a disordered region. 2 positions are modified to phosphoserine: serine 401 and serine 410.

The protein belongs to the alpha-IPM synthase/homocitrate synthase family. Homocitrate synthase LYS20/LYS21 subfamily. Mg(2+) is required as a cofactor. It depends on Mn(2+) as a cofactor.

It is found in the cytoplasm. It catalyses the reaction acetyl-CoA + 2-oxoglutarate + H2O = (2R)-homocitrate + CoA + H(+). The protein operates within amino-acid biosynthesis; L-lysine biosynthesis via AAA pathway; L-alpha-aminoadipate from 2-oxoglutarate: step 1/5. In terms of biological role, catalyzes the aldol-type condensation of 2-oxoglutarate with acetyl-CoA to yield homocitrate. Carries out the first step of the alpha-aminoadipate (AAA) lysine biosynthesis pathway. The chain is Homocitrate synthase, cytosolic isozyme (LYS20) from Saccharomyces cerevisiae (strain ATCC 204508 / S288c) (Baker's yeast).